The sequence spans 105 residues: Thioredoxin (105 aa).

One can recognise a Thioredoxin domain in the interval 2–105; it reads VKLIESKEAF…KLEASITEYA (104 aa). Lys-3 is modified (N6-acetyllysine). The residue at position 8 (Lys-8) is an N6-succinyllysine. Active-site nucleophile residues include Cys-32 and Cys-35. A disulfide bridge connects residues Cys-32 and Cys-35. An N6-acetyllysine modification is found at Lys-39. S-nitrosocysteine occurs at positions 62 and 69. Cys-73 carries the post-translational modification S-nitrosocysteine; alternate. Lys-94 is subject to N6-acetyllysine; alternate. Lys-94 carries the post-translational modification N6-succinyllysine; alternate.

The protein belongs to the thioredoxin family. In terms of assembly, homodimer; disulfide-linked. Interacts with TXNIP through the redox-active site. Interacts with MAP3K5 and CASP3. Interacts with APEX1; the interaction stimulates the FOS/JUN AP-1 DNA-binding activity in a redox-dependent manner. Post-translationally, in the fully reduced protein, both Cys-69 and Cys-73 are nitrosylated in response to nitric oxide (NO). When two disulfide bonds are present in the protein, only Cys-73 is nitrosylated. Cys-73 can serve as donor for nitrosylation of target proteins.

Its subcellular location is the nucleus. The protein resides in the cytoplasm. It localises to the secreted. In terms of biological role, participates in various redox reactions through the reversible oxidation of its active center dithiol to a disulfide and catalyzes dithiol-disulfide exchange reactions. Plays a role in the reversible S-nitrosylation of cysteine residues in target proteins, and thereby contributes to the response to intracellular nitric oxide. Nitrosylates the active site Cys of CASP3 in response to nitric oxide (NO), and thereby inhibits caspase-3 activity. Induces the FOS/JUN AP-1 DNA binding activity in ionizing radiation (IR) cells through its oxidation/reduction status and stimulates AP-1 transcriptional activity. Functionally, ADF augments the expression of the interleukin-2 receptor TAC (IL2R/P55). This Mus musculus (Mouse) protein is Thioredoxin (Txn).